A 285-amino-acid polypeptide reads, in one-letter code: Shikimate dehydrogenase (NADP(+)) (285 aa).

Residues Ser-22 to Ser-24 and Thr-71 each bind shikimate. The active-site Proton acceptor is Lys-75. Shikimate is bound by residues Asn-96 and Asp-111. NADP(+)-binding positions include Gly-136–Ala-140, Asn-160–Arg-165, and Ile-225. Residue Tyr-227 participates in shikimate binding. Gly-248 is a binding site for NADP(+).

It belongs to the shikimate dehydrogenase family. As to quaternary structure, homodimer.

The enzyme catalyses shikimate + NADP(+) = 3-dehydroshikimate + NADPH + H(+). It functions in the pathway metabolic intermediate biosynthesis; chorismate biosynthesis; chorismate from D-erythrose 4-phosphate and phosphoenolpyruvate: step 4/7. Functionally, involved in the biosynthesis of the chorismate, which leads to the biosynthesis of aromatic amino acids. Catalyzes the reversible NADPH linked reduction of 3-dehydroshikimate (DHSA) to yield shikimate (SA). The chain is Shikimate dehydrogenase (NADP(+)) from Rhizobium etli (strain CIAT 652).